The sequence spans 229 residues: UPF0173 metal-dependent hydrolase SERP1270 (229 aa).

The protein belongs to the UPF0173 family.

This chain is UPF0173 metal-dependent hydrolase SERP1270, found in Staphylococcus epidermidis (strain ATCC 35984 / DSM 28319 / BCRC 17069 / CCUG 31568 / BM 3577 / RP62A).